Here is a 393-residue protein sequence, read N- to C-terminus: Lipid-A-disaccharide synthase (393 aa).

The protein belongs to the LpxB family.

It carries out the reaction a lipid X + a UDP-2-N,3-O-bis[(3R)-3-hydroxyacyl]-alpha-D-glucosamine = a lipid A disaccharide + UDP + H(+). Its pathway is bacterial outer membrane biogenesis; LPS lipid A biosynthesis. Functionally, condensation of UDP-2,3-diacylglucosamine and 2,3-diacylglucosamine-1-phosphate to form lipid A disaccharide, a precursor of lipid A, a phosphorylated glycolipid that anchors the lipopolysaccharide to the outer membrane of the cell. The protein is Lipid-A-disaccharide synthase of Colwellia psychrerythraea (strain 34H / ATCC BAA-681) (Vibrio psychroerythus).